A 137-amino-acid chain; its full sequence is Protein Flattop homolog (137 aa).

This sequence belongs to the Flattop family.

It is found in the cytoplasm. The protein localises to the cytoskeleton. Its subcellular location is the flagellum axoneme. In terms of biological role, microtubule inner protein (MIP) part of the dynein-decorated doublet microtubules (DMTs) in cilia axoneme. Acts as a regulator of cilium basal body docking and positioning in mono- and multiciliated cells. Regulates basal body docking and cilia formation in multiciliated lung cells. Regulates kinocilium positioning and stereocilia bundle morphogenesis in the inner ear. In Chlamydomonas reinhardtii (Chlamydomonas smithii), this protein is Protein Flattop homolog.